A 76-amino-acid polypeptide reads, in one-letter code: Putative membrane protein insertion efficiency factor (76 aa).

This sequence belongs to the UPF0161 family.

It is found in the cell inner membrane. In terms of biological role, could be involved in insertion of integral membrane proteins into the membrane. This is Putative membrane protein insertion efficiency factor from Anaeromyxobacter dehalogenans (strain 2CP-C).